The sequence spans 345 residues: Dihydroorotase (345 aa).

2 residues coordinate Zn(2+): His-14 and His-16. Residues 16 to 18 (HLR) and Asn-42 each bind substrate. Zn(2+)-binding residues include Lys-100, His-137, and His-175. Lys-100 carries the post-translational modification N6-carboxylysine. His-137 contributes to the substrate binding site. Position 220 (Leu-220) interacts with substrate. Asp-248 contributes to the Zn(2+) binding site. The active site involves Asp-248. Substrate contacts are provided by His-252 and Ala-264.

This sequence belongs to the metallo-dependent hydrolases superfamily. DHOase family. Class II DHOase subfamily. As to quaternary structure, homodimer. It depends on Zn(2+) as a cofactor.

It catalyses the reaction (S)-dihydroorotate + H2O = N-carbamoyl-L-aspartate + H(+). It functions in the pathway pyrimidine metabolism; UMP biosynthesis via de novo pathway; (S)-dihydroorotate from bicarbonate: step 3/3. Its function is as follows. Catalyzes the reversible cyclization of carbamoyl aspartate to dihydroorotate. This is Dihydroorotase from Methylobacillus flagellatus (strain ATCC 51484 / DSM 6875 / VKM B-1610 / KT).